Here is a 526-residue protein sequence, read N- to C-terminus: Dolichyl pyrophosphate Glc1Man9GlcNAc2 alpha-1,3-glucosyltransferase (526 aa).

The next 11 helical transmembrane spans lie at 9 to 29 (AGGHWFSALALGVTLLKCLLI), 108 to 128 (FSVILTDALFVYAVHECCKCI), 143 to 163 (FILSVLLLWNFGLLIVDHIHF), 188 to 208 (GALLFAVLLHLKHIYLYVAPA), 238 to 258 (VTSLGLIVFLVSALSLGPFLA), 334 to 354 (PLATLICTLIAILPSVFCLWF), 361 to 380 (GFLRCLVLCALSSFMFGWHV), 400 to 422 (AGDATVFLILATTGHYSLFPLLF), 427 to 449 (LPIKILLMLLFTVYSISSLKTLF), 461 to 481 (TVYLLGLGPLEVCCEFLLPFT), and 487 to 507 (YPFIPLLLTSVYCAVGITYAW).

The protein belongs to the ALG6/ALG8 glucosyltransferase family.

Its subcellular location is the endoplasmic reticulum membrane. It catalyses the reaction an alpha-D-Glc-(1-&gt;3)-alpha-D-Man-(1-&gt;2)-alpha-D-Man-(1-&gt;2)-alpha-D-Man-(1-&gt;3)-[alpha-D-Man-(1-&gt;2)-alpha-D-Man-(1-&gt;3)-[alpha-D-Man-(1-&gt;2)-alpha-D-Man-(1-&gt;6)]-alpha-D-Man-(1-&gt;6)]-beta-D-Man-(1-&gt;4)-beta-D-GlcNAc-(1-&gt;4)-alpha-D-GlcNAc-diphospho-di-trans,poly-cis-dolichol + a di-trans,poly-cis-dolichyl beta-D-glucosyl phosphate = an alpha-D-Glc-(1-&gt;3)-alpha-D-Glc-(1-&gt;3)-alpha-D-Man-(1-&gt;2)-alpha-D-Man-(1-&gt;2)-alpha-D-Man-(1-&gt;3)-[alpha-D-Man-(1-&gt;2)-alpha-D-Man-(1-&gt;3)-[alpha-D-Man-(1-&gt;2)-alpha-D-Man-(1-&gt;6)]-alpha-D-Man-(1-&gt;6)]-beta-D-Man-(1-&gt;4)-beta-D-GlcNAc-(1-&gt;4)-alpha-D-GlcNAc-diphospho-di-trans,poly-cis-dolichol + a di-trans,poly-cis-dolichyl phosphate + H(+). The protein operates within protein modification; protein glycosylation. In terms of biological role, dolichyl pyrophosphate Glc1Man9GlcNAc2 alpha-1,3-glucosyltransferase that operates in the biosynthetic pathway of dolichol-linked oligosaccharides, the glycan precursors employed in protein asparagine (N)-glycosylation. The assembly of dolichol-linked oligosaccharides begins on the cytosolic side of the endoplasmic reticulum membrane and finishes in its lumen. The sequential addition of sugars to dolichol pyrophosphate produces dolichol-linked oligosaccharides containing fourteen sugars, including two GlcNAcs, nine mannoses and three glucoses. Once assembled, the oligosaccharide is transferred from the lipid to nascent proteins by oligosaccharyltransferases. In the lumen of the endoplasmic reticulum, adds the second glucose residue from dolichyl phosphate glucose (Dol-P-Glc) onto the lipid-linked oligosaccharide intermediate Glc(1)Man(9)GlcNAc(2)-PP-Dol to produce Glc(2)Man(9)GlcNAc(2)-PP-Dol. Glc(2)Man(9)GlcNAc(2)-PP-Dol is a substrate for ALG10, the following enzyme in the biosynthetic pathway. Required for PKD1/Polycystin-1 maturation and localization to the plasma membrane of the primary cilia. This Mus musculus (Mouse) protein is Dolichyl pyrophosphate Glc1Man9GlcNAc2 alpha-1,3-glucosyltransferase.